Here is a 725-residue protein sequence, read N- to C-terminus: Ribosomal RNA large subunit methyltransferase K/L (725 aa).

The THUMP domain occupies 46 to 157; the sequence is VAYRLCLWSR…RGQATLSLDL (112 aa). Residues 393-412 are disordered; it reads TGERGERNDDGQARAPSEPA. Over residues 395–404 the composition is skewed to basic and acidic residues; it reads ERGERNDDGQ.

This sequence belongs to the methyltransferase superfamily. RlmKL family.

It localises to the cytoplasm. The catalysed reaction is guanosine(2445) in 23S rRNA + S-adenosyl-L-methionine = N(2)-methylguanosine(2445) in 23S rRNA + S-adenosyl-L-homocysteine + H(+). It catalyses the reaction guanosine(2069) in 23S rRNA + S-adenosyl-L-methionine = N(2)-methylguanosine(2069) in 23S rRNA + S-adenosyl-L-homocysteine + H(+). In terms of biological role, specifically methylates the guanine in position 2445 (m2G2445) and the guanine in position 2069 (m7G2069) of 23S rRNA. This Pseudomonas paraeruginosa (strain DSM 24068 / PA7) (Pseudomonas aeruginosa (strain PA7)) protein is Ribosomal RNA large subunit methyltransferase K/L.